A 361-amino-acid chain; its full sequence is DNA replication and repair protein RecF (361 aa).

30–37 (GANGSGKT) is a binding site for ATP.

The protein belongs to the RecF family.

The protein resides in the cytoplasm. In terms of biological role, the RecF protein is involved in DNA metabolism; it is required for DNA replication and normal SOS inducibility. RecF binds preferentially to single-stranded, linear DNA. It also seems to bind ATP. This chain is DNA replication and repair protein RecF, found in Chromohalobacter salexigens (strain ATCC BAA-138 / DSM 3043 / CIP 106854 / NCIMB 13768 / 1H11).